Consider the following 795-residue polypeptide: Phenylalanine--tRNA ligase beta subunit (795 aa).

Residues 39-148 enclose the tRNA-binding domain; it reads AGAFHGVVVG…ADAPIGTDIR (110 aa). The B5 domain occupies 401-476; that stretch reads PTRATITLRR…RIYGYNNIPN (76 aa). Mg(2+) is bound by residues aspartate 454, aspartate 460, glutamate 463, and glutamate 464. The FDX-ACB domain occupies 701 to 794; the sequence is SRFPANRRDI…LKQRFQASLR (94 aa).

Belongs to the phenylalanyl-tRNA synthetase beta subunit family. Type 1 subfamily. In terms of assembly, tetramer of two alpha and two beta subunits. Mg(2+) serves as cofactor.

The protein localises to the cytoplasm. It carries out the reaction tRNA(Phe) + L-phenylalanine + ATP = L-phenylalanyl-tRNA(Phe) + AMP + diphosphate + H(+). This Pectobacterium atrosepticum (strain SCRI 1043 / ATCC BAA-672) (Erwinia carotovora subsp. atroseptica) protein is Phenylalanine--tRNA ligase beta subunit.